Here is a 365-residue protein sequence, read N- to C-terminus: Outer capsid protein sigma-3 (365 aa).

A CCHC-type zinc finger spans residues 51-73 (CMHCLGVVGSLQRKLKHLPHHRC).

Belongs to the orthoreovirus sigma-3 protein family. As to quaternary structure, heterohexamer of three sigma-3 and three Mu-1 proteins. The RNA-binding form is probably a homodimer. In terms of processing, cleaved during virus the endosomal proteolytic disassembly of the outer capsid.

Its subcellular location is the virion. The protein localises to the host cytoplasm. The protein resides in the host nucleus. Its function is as follows. Stimulates translation by blocking the activation of the dsRNA-dependent protein kinase EIF2AK2/PKR, thereby inhibiting the host interferon response. Sigma3 prevents the activation of EIF2AK2 by competing with the kinase for dsRNA-binding. Functionally, the viral outer shell polypeptides, of which sigma-3 is one, impose structural constraints that prevent elongation of nascent transcripts by the RNA-dependent RNA polymerase lambda-3. The sequence is that of Outer capsid protein sigma-3 (S4) from Reovirus type 3 (strain Dearing) (T3D).